The chain runs to 1044 residues: MSYVKRIRQPIIAVLGHVDHGKCLLPEERVILPDYGPITLEELFNMTKETVFKDEEKEVRKLGIRMPVAGVDGRVRLLEGPYVWKVRYKGKMLRVKLKDWHSVAVTPEHPFLTTRGWVRADQLKPGDYVAVPKILPGKDDKEKFLQYVHEKLKGKVHIKLPSSDEEWETFFYFAGTIFGRENSVNPEGLTHEVKALLELFKVLFEYPREVLRVLFMAPVRYVANFLRGFFDINGYVNGEELRVEVRGAPHEVLEELSLILLRLGIVSKIYPTSLAISGRRNLELFRRYIGFSEKQKAKELEGIIRRSENSESYPIFEELRRIRLLFGFTRAELSSTIPLYSKYESKEAPSYEILMKILNTIEKGSKDLNKKITILEGRVRDHEYIEEFKREGLIKDGKLTELGKELLEVWRNREFDSRDVNYLRNIIENFVFLPVEKIEEFEYDGYVYDVTTETHNFIANGILVHNTTLLDKIRKTNVAAKEAGGITQHIGATEVPIDVVKKIAGPLIKLWKAEIRLPGLLFIDTPGHEAFTSLRARGGSLADLAVLVIDVNEGFQPQTIESIEILRRYRTPFVVAANKIDRIRGWVIEEDEPFLMNIKRQDQRAIQELETKLWELIGKFYEFGFQANRFDRVQNFTRELAIVPISAKYGIGIAELLVLIAGLSQKYLEEKLKIEVEGPARGTILEVREEPGLGHTIDVIIYDGTLHKDDTIVVGGKDKAIVTKVRALLKPKPLDEIRDPRFRFDYVDEVTAAAGVKIAAPGLEEALAGSPVIAAPTPEDVERAKEEIMRQIESVVISTDKVGVIVKADTLGSLEALSKELQEKEIPIRKADVGNISKTDVMEALSVKEENPKYGVILGFNVKVNEDAKEVAKAKEVPIFVGNIIYKLIEDYEAWIKEEEEKRKRELLAKVTFPGVIKLYPDERYVFRRSNPAIVGIEVLEGRIKPGVTLIKQNGQKVGTIRSIKSRDEFLQEARKGQAVAIAIEGAIVGRHIHPGETLYVDLSRDDAIILLKHLRDVLEDTDIKALKMIAQVKAKEDPFWRAV.

One can recognise a DOD-type homing endonuclease domain in the interval 173-265 (FAGTIFGREN…LSLILLRLGI (93 aa)). The tr-type G domain occupies 451–668 (TTETHNFIAN…LIAGLSQKYL (218 aa)). GTP contacts are provided by residues 524-528 (DTPGH) and 578-581 (NKID).

The protein belongs to the TRAFAC class translation factor GTPase superfamily. Classic translation factor GTPase family. IF-2 subfamily. Post-translationally, this protein undergoes a protein self splicing that involves a post-translational excision of the intervening region (intein) followed by peptide ligation.

Its function is as follows. Function in general translation initiation by promoting the binding of the formylmethionine-tRNA to ribosomes. Seems to function along with eIF-2. This is Probable translation initiation factor IF-2 (infB) from Pyrococcus horikoshii (strain ATCC 700860 / DSM 12428 / JCM 9974 / NBRC 100139 / OT-3).